A 64-amino-acid chain; its full sequence is Palmitoyl-CoA hydrolase (64 aa).

Belongs to the type-B carboxylesterase/lipase family. In terms of assembly, monomer and homotrimer.

The protein localises to the microsome. It localises to the endoplasmic reticulum. It catalyses the reaction hexadecanoyl-CoA + H2O = hexadecanoate + CoA + H(+). Hydrolysis of a variety of CoA thioesters of long-chain fatty acids. In Rattus norvegicus (Rat), this protein is Palmitoyl-CoA hydrolase.